A 141-amino-acid polypeptide reads, in one-letter code: Hemoglobin subunit alpha (141 aa).

Residues Val1–Arg141 enclose the Globin domain. The residue at position 3 (Ser3) is a Phosphoserine. N6-succinyllysine occurs at positions 7 and 11. Lys16 is subject to N6-acetyllysine; alternate. Lys16 is subject to N6-succinyllysine; alternate. Phosphotyrosine is present on Tyr24. Ser35 carries the phosphoserine modification. Lys40 bears the N6-succinyllysine mark. A Phosphoserine modification is found at Ser49. O2 is bound at residue His58. His87 provides a ligand contact to heme b. Ser102 carries the post-translational modification Phosphoserine. Thr108 carries the post-translational modification Phosphothreonine. Ser124 carries the post-translational modification Phosphoserine. 2 positions are modified to phosphothreonine: Thr134 and Thr137. A Phosphoserine modification is found at Ser138.

It belongs to the globin family. In terms of assembly, heterotetramer of two alpha chains and two beta chains. In terms of tissue distribution, red blood cells.

Its function is as follows. Involved in oxygen transport from the lung to the various peripheral tissues. Hemopressin acts as an antagonist peptide of the cannabinoid receptor CNR1. Hemopressin-binding efficiently blocks cannabinoid receptor CNR1 and subsequent signaling. This Tupaia glis (Common tree shrew) protein is Hemoglobin subunit alpha (HBA).